The following is a 543-amino-acid chain: MRRRITFVQRPETPFSLDQAVLTPDALALHGIDGAREERATFSVDELPEELSDVLKQCHQLHVRWASERRYDAVAPFSSRVSPGLHVFYTPVDGSSEENKLKSLCALLKRAFDYGLKCKSPETLEESFITPPILSTRFASTAAFQYHSLLPTLDNLVAYIENKICSSSDEQCLRYAASIRSADSVDINYDSISHSLTVLGYWSQSPKNGWTDEIRRHAAGTDQVEVGLLGTEAATEPEDIKMGGLLAVVGKDDQLSMLSSGLPSEFGVAYGYGTDDSWAEPTLFSFPSRHQPLPEDATYSISFTSPTGLHPTMTISMPPSSLNSPPAPPDATCALHTYLTLPSTIFGDKYQLSTTDPLFLDSHNLVALHAVAGETDLEAPDWFVSRWGSNWLLELATPSESDQVPEEWNVTIPLHLRYLRPSESGYRSASVPWPVVFWACTAEDGTKMGVNPFDRVNLGWEGLFGTRTMFYQLHPSSDRLVEELEVPVLQLDDKGFFQSKAIELGTMIVIGLGSLWVLWKLGAIAWSSGTRPQRKSTKQKKSE.

The Lumenal portion of the chain corresponds to M1 to E503. Residue N409 is glycosylated (N-linked (GlcNAc...) asparagine). A helical transmembrane segment spans residues L504–I524. Residues A525–E543 are Cytoplasmic-facing.

It belongs to the PIGX family.

Its subcellular location is the endoplasmic reticulum membrane. It functions in the pathway glycolipid biosynthesis; glycosylphosphatidylinositol-anchor biosynthesis. Its function is as follows. Required for proper folding and/or the stability of a subset of proteins in the endoplasmic reticulum. Component of glycosylphosphatidylinositol-mannosyltransferase 1 which transfers the first of the 4 mannoses in the GPI-anchor precursors during GPI-anchor biosynthesis. Probably acts by stabilizing the mannosyltransferase gpi14. The polypeptide is Protein pbn1 (pbn1) (Aspergillus oryzae (strain ATCC 42149 / RIB 40) (Yellow koji mold)).